Consider the following 434-residue polypeptide: F-box only protein 15 (434 aa).

Residues 1 to 41 (MPSEILLKIFSYLDAVSLLCAGCVSRRFYHLANDNFIWIRI) enclose the F-box domain.

In terms of assembly, directly interacts with SKP1 and CUL1.

Substrate-recognition component of the SCF (SKP1-CUL1-F-box protein)-type E3 ubiquitin ligase complex. The protein is F-box only protein 15 (FBXO15) of Macaca fascicularis (Crab-eating macaque).